Consider the following 200-residue polypeptide: Ribonuclease HII (200 aa).

Residues 6-200 form the RNase H type-2 domain; it reads ESIAGVDEVG…KLFAVHGSLT (195 aa). A divalent metal cation contacts are provided by Asp12, Glu13, and Asp108.

This sequence belongs to the RNase HII family. It depends on Mn(2+) as a cofactor. Mg(2+) serves as cofactor.

Its subcellular location is the cytoplasm. It carries out the reaction Endonucleolytic cleavage to 5'-phosphomonoester.. Endonuclease that specifically degrades the RNA of RNA-DNA hybrids. The chain is Ribonuclease HII from Prochlorococcus marinus (strain MIT 9303).